We begin with the raw amino-acid sequence, 175 residues long: ATP-dependent protease subunit HslV (175 aa).

The active site involves Thr5. Residues Gly160, Asp163, and Thr166 each coordinate Na(+).

The protein belongs to the peptidase T1B family. HslV subfamily. As to quaternary structure, a double ring-shaped homohexamer of HslV is capped on each side by a ring-shaped HslU homohexamer. The assembly of the HslU/HslV complex is dependent on binding of ATP.

The protein localises to the cytoplasm. It catalyses the reaction ATP-dependent cleavage of peptide bonds with broad specificity.. Its activity is regulated as follows. Allosterically activated by HslU binding. Functionally, protease subunit of a proteasome-like degradation complex believed to be a general protein degrading machinery. In Myxococcus xanthus, this protein is ATP-dependent protease subunit HslV.